Reading from the N-terminus, the 697-residue chain is PHD finger protein At1g33420 (697 aa).

The segment at 603-653 (KVDCKCGTKDDDGERMLACDGCGVWHHTRCIGINNADALPSKFLCFRCIEL) adopts a PHD-type zinc-finger fold.

It is found in the nucleus. The chain is PHD finger protein At1g33420 from Arabidopsis thaliana (Mouse-ear cress).